The sequence spans 515 residues: MTKRVLISVSDKAGIVEFAQELKKLGWEIISTGGTKVALDNAGVDTIAIDDMTGFPEMMDGRVKTLHPNIHGGLLARRDLDSHLEAAKDNKIELIDLVVVNLYPFKETILKPDVTYADAVENIDIGGPSMLRSAAKNHASVTVVVDPADYAVVLDELSANGETTYETRQRLAAKVFRHTAAYDALIAEYFTAQVGESKPEKLTLTYDLKQAMRYGENPQQDADFYQKALPTDYSIASAKQLNGKELSFNNIRDADAAIRIIRDFKDRPTVVALKHMNPCGIGQADNIETAWDYAYESDPVSIFGGIVVLNREVDAATAEKMHGVFLEIIIAPSYTDEALAILINKKKNLRILALPFNAQEASEVEAEYTGVVGGLLVQNQDVVKESPADWQVVTKRQPTETEATALEFAWKAIKYVKSNGIIVTNDHMTLGVGPGQTNRVASVRLAIDQAKDRLNGAVLASDAFFPFADNVEEIAKAGIKAIIQPGGSVRDQESIEAADKYGLTMVFTGVRHFRH.

The MGS-like domain occupies 1-145 (MTKRVLISVS…KNHASVTVVV (145 aa)).

Belongs to the PurH family.

The catalysed reaction is (6R)-10-formyltetrahydrofolate + 5-amino-1-(5-phospho-beta-D-ribosyl)imidazole-4-carboxamide = 5-formamido-1-(5-phospho-D-ribosyl)imidazole-4-carboxamide + (6S)-5,6,7,8-tetrahydrofolate. It carries out the reaction IMP + H2O = 5-formamido-1-(5-phospho-D-ribosyl)imidazole-4-carboxamide. It participates in purine metabolism; IMP biosynthesis via de novo pathway; 5-formamido-1-(5-phospho-D-ribosyl)imidazole-4-carboxamide from 5-amino-1-(5-phospho-D-ribosyl)imidazole-4-carboxamide (10-formyl THF route): step 1/1. Its pathway is purine metabolism; IMP biosynthesis via de novo pathway; IMP from 5-formamido-1-(5-phospho-D-ribosyl)imidazole-4-carboxamide: step 1/1. The polypeptide is Bifunctional purine biosynthesis protein PurH (Streptococcus pneumoniae serotype 19F (strain G54)).